The following is a 136-amino-acid chain: MADYQFQRVIRFGDTDAAGVVYFAQLLSICHEAYEAAIAALGIELRSFFSDRGSVILPIVHAEIDYQRPTYCGDRLEIELQATALGRDRFRVDYRLSHNHQPVATAQTIHLCLESQTRQRSPLPERLQDWLQITAD.

The active site involves D16.

This sequence belongs to the 4-hydroxybenzoyl-CoA thioesterase family. DHNA-CoA hydrolase subfamily.

It catalyses the reaction 1,4-dihydroxy-2-naphthoyl-CoA + H2O = 1,4-dihydroxy-2-naphthoate + CoA + H(+). The protein operates within cofactor biosynthesis; phylloquinone biosynthesis. It participates in quinol/quinone metabolism; 1,4-dihydroxy-2-naphthoate biosynthesis; 1,4-dihydroxy-2-naphthoate from chorismate: step 7/7. Catalyzes the hydrolysis of 1,4-dihydroxy-2-naphthoyl-CoA (DHNA-CoA) to 1,4-dihydroxy-2-naphthoate (DHNA), a reaction involved in phylloquinone (vitamin K1) biosynthesis. The protein is 1,4-dihydroxy-2-naphthoyl-CoA hydrolase of Synechococcus sp. (strain ATCC 27144 / PCC 6301 / SAUG 1402/1) (Anacystis nidulans).